A 402-amino-acid chain; its full sequence is MDWQTTSADTAPSSFITEEQDRSLFGKPPASGAWKESDPVGGRRFAGIGAFGFESGESLPFVRIAYETWGELSPARDNAVLVLHALTGDSHAVGAAGPGHRTSGWWQGIIGPGKAIDTDRWFVAVPNMLGGCQGTTGPTSIAPDGAEWGARFPFTTIRDQVKAQAAFADALGIGRWAAVVGGSMGGMQALEWAVGFPERVERLAVIAAPPHSTADQIAFNSVQLGAIRTDPLFHGGSYYDEKDGEGPHQGLALARRMALITYRSLSELNDRFERTWQSGISPLGDGGRFAVESYLDFHGNKFTRRFDANSYLTLVQAMNSHDVGHDGSGLAAALSRVTATTLVVGIDSDRLFPVDGQELIASHLPAALDGRVPLVVRSHFGHDGFLIEDDLIGGQLRRLFAA.

Residues 1-17 are compositionally biased toward polar residues; that stretch reads MDWQTTSADTAPSSFIT. A disordered region spans residues 1-39; that stretch reads MDWQTTSADTAPSSFITEEQDRSLFGKPPASGAWKESDP. One can recognise an AB hydrolase-1 domain in the interval 78–388; that stretch reads NAVLVLHALT…HFGHDGFLIE (311 aa). The active-site Nucleophile is Ser183. Arg255 is a substrate binding site. Residues Asp349 and His382 contribute to the active site. Asp383 serves as a coordination point for substrate.

Belongs to the AB hydrolase superfamily. MetX family. As to quaternary structure, homodimer.

The protein resides in the cytoplasm. The catalysed reaction is L-homoserine + acetyl-CoA = O-acetyl-L-homoserine + CoA. It participates in amino-acid biosynthesis; L-methionine biosynthesis via de novo pathway; O-acetyl-L-homoserine from L-homoserine: step 1/1. Transfers an acetyl group from acetyl-CoA to L-homoserine, forming acetyl-L-homoserine. This is Homoserine O-acetyltransferase from Leifsonia xyli subsp. xyli (strain CTCB07).